A 119-amino-acid polypeptide reads, in one-letter code: Putative membrane protein insertion efficiency factor (119 aa).

The tract at residues 82–119 is disordered; sequence NALRGEKGGESAADVPSGGSVSEPPGPAAETSPNAQGA.

It belongs to the UPF0161 family.

Its subcellular location is the cell membrane. In terms of biological role, could be involved in insertion of integral membrane proteins into the membrane. This is Putative membrane protein insertion efficiency factor from Streptomyces griseus subsp. griseus (strain JCM 4626 / CBS 651.72 / NBRC 13350 / KCC S-0626 / ISP 5235).